A 311-amino-acid chain; its full sequence is Aspartate carbamoyltransferase catalytic subunit (311 aa).

Carbamoyl phosphate is bound by residues Arg-55 and Thr-56. An L-aspartate-binding site is contributed by Lys-85. The carbamoyl phosphate site is built by Arg-106, His-135, and Gln-138. L-aspartate-binding residues include Arg-168 and Arg-230. 2 residues coordinate carbamoyl phosphate: Leu-268 and Pro-269.

It belongs to the aspartate/ornithine carbamoyltransferase superfamily. ATCase family. As to quaternary structure, heterododecamer (2C3:3R2) of six catalytic PyrB chains organized as two trimers (C3), and six regulatory PyrI chains organized as three dimers (R2).

It carries out the reaction carbamoyl phosphate + L-aspartate = N-carbamoyl-L-aspartate + phosphate + H(+). The protein operates within pyrimidine metabolism; UMP biosynthesis via de novo pathway; (S)-dihydroorotate from bicarbonate: step 2/3. Its function is as follows. Catalyzes the condensation of carbamoyl phosphate and aspartate to form carbamoyl aspartate and inorganic phosphate, the committed step in the de novo pyrimidine nucleotide biosynthesis pathway. This chain is Aspartate carbamoyltransferase catalytic subunit, found in Baumannia cicadellinicola subsp. Homalodisca coagulata.